The chain runs to 629 residues: Probable potassium transport system protein Kup 3 (629 aa).

12 helical membrane-spanning segments follow: residues 20–40 (LSLSALGIVYGDIGTSPLYTF), 61–81 (VSLIIWTLIIIASVKYISFAL), 106–126 (PFIIAVGLMGAALIYGDGTIT), 143–163 (PSLKYYVLPIAITILITLFAI), 171–191 (IGKAFGPVMAFWFLTIGILGA), 212–232 (FLFSNGATGFFILCGVFLCVT), 253–273 (WFGLAFPSLIFNYLGQAALVL), 291–311 (FLLPLIILSTVATIIASQAII), 343–363 (IYIGVVNWFLMLATLGLTIGF), 372–392 (AYGIAVSATMLCTTVLLFIAL), 400–420 (IITSGLVAGLFMIVDASFFAA), and 425–445 (FINGGYIPITLAIIIYSMMYI).

This sequence belongs to the HAK/KUP transporter (TC 2.A.72) family.

The protein localises to the cell inner membrane. The catalysed reaction is K(+)(in) + H(+)(in) = K(+)(out) + H(+)(out). Transport of potassium into the cell. Likely operates as a K(+):H(+) symporter. This Legionella pneumophila (strain Lens) protein is Probable potassium transport system protein Kup 3.